A 350-amino-acid polypeptide reads, in one-letter code: Putative deoxyribonuclease-2 (350 aa).

This sequence belongs to the DNase II family.

The sequence is that of Putative deoxyribonuclease-2 from Burkholderia thailandensis (strain ATCC 700388 / DSM 13276 / CCUG 48851 / CIP 106301 / E264).